Consider the following 463-residue polypeptide: Asparagine--tRNA ligase (463 aa).

This sequence belongs to the class-II aminoacyl-tRNA synthetase family. As to quaternary structure, homodimer.

The protein localises to the cytoplasm. It catalyses the reaction tRNA(Asn) + L-asparagine + ATP = L-asparaginyl-tRNA(Asn) + AMP + diphosphate + H(+). This Bacillus cereus (strain ZK / E33L) protein is Asparagine--tRNA ligase.